The following is a 197-amino-acid chain: NADH-quinone oxidoreductase subunit B (197 aa).

4 residues coordinate [4Fe-4S] cluster: cysteine 76, cysteine 77, cysteine 141, and cysteine 171.

It belongs to the complex I 20 kDa subunit family. As to quaternary structure, NDH-1 is composed of 14 different subunits. Subunits NuoB, C, D, E, F, and G constitute the peripheral sector of the complex. Requires [4Fe-4S] cluster as cofactor.

It is found in the cell inner membrane. The catalysed reaction is a quinone + NADH + 5 H(+)(in) = a quinol + NAD(+) + 4 H(+)(out). Functionally, NDH-1 shuttles electrons from NADH, via FMN and iron-sulfur (Fe-S) centers, to quinones in the respiratory chain. The immediate electron acceptor for the enzyme in this species is believed to be ubiquinone. Couples the redox reaction to proton translocation (for every two electrons transferred, four hydrogen ions are translocated across the cytoplasmic membrane), and thus conserves the redox energy in a proton gradient. The protein is NADH-quinone oxidoreductase subunit B of Methylobacterium nodulans (strain LMG 21967 / CNCM I-2342 / ORS 2060).